Reading from the N-terminus, the 410-residue chain is Exopolygalacturonase (410 aa).

The first 22 residues, 1 to 22 (MACTNNAMRALFLLVLFCIVHG), serve as a signal peptide directing secretion. The N-linked (GlcNAc...) asparagine glycan is linked to Asn-89. PbH1 repeat units lie at residues 192-218 (CKDM…HMGD), 219-240 (SSGI…SIGP), 242-262 (TSKV…SIGS), 272-293 (VTDI…RIKA), and 337-377 (ASKV…TMDD). Asp-233 serves as the catalytic Proton donor. Cys-235 and Cys-252 are oxidised to a cystine. Residue Asn-246 is glycosylated (N-linked (GlcNAc...) asparagine). His-256 is an active-site residue. The N-linked (GlcNAc...) asparagine glycan is linked to Asn-349. Residues Cys-364 and Cys-370 are joined by a disulfide bond. Asn-387 carries N-linked (GlcNAc...) asparagine glycosylation. An intrachain disulfide couples Cys-393 to Cys-409.

Belongs to the glycosyl hydrolase 28 family. In terms of tissue distribution, pollen.

It localises to the secreted. The protein resides in the cell wall. The enzyme catalyses [(1-&gt;4)-alpha-D-galacturonosyl](n) + H2O = alpha-D-galacturonate + [(1-&gt;4)-alpha-D-galacturonosyl](n-1). In terms of biological role, may function in depolymerizing pectin during pollen development, germination, and tube growth. Acts as an exo-polygalacturonase. The polypeptide is Exopolygalacturonase (PG1) (Zea mays (Maize)).